The sequence spans 497 residues: Di-/tripeptide transporter (497 aa).

Residues 1-36 (MQNLNKTEKTFFGQPRGLLTLFQTEFWERFSYYGMR) lie on the Cytoplasmic side of the membrane. A helical membrane pass occupies residues 37 to 55 (AILVYYLYALTTADNAGLG). At 56 to 64 (LPKAQAMAI) the chain is on the extracellular side. A helical membrane pass occupies residues 65–83 (VSIYGALVYLSTIVGGWVA). Topologically, residues 84 to 92 (DRLLGASRT) are cytoplasmic. The chain crosses the membrane as a helical span at residues 93–111 (IFLGGILITLGHVALATPF). At 112 to 115 (GLSS) the chain is on the extracellular side. Residues 116–134 (LFVALFLIILGTGMLKPNI) form a helical membrane-spanning segment. At 135 to 154 (SNMVGHLYSKDDSRRDTGFN) the chain is on the cytoplasmic side. The chain crosses the membrane as a helical span at residues 155 to 173 (IFVVGINMGSLIAPLIVGT). Over 174 to 181 (VGQGVNYH) the chain is Extracellular. The helical transmembrane segment at 182–200 (LGFSLAAIGMIFALFAYWY) threads the bilayer. Topologically, residues 201–224 (GRLRHFPEIGREPSNPMDAKAKRN) are cytoplasmic. The helical transmembrane segment at 225 to 243 (FIITLTIVLIVALIGFFLI) threads the bilayer. The Extracellular portion of the chain corresponds to 244–254 (YQASPANFINN). A helical transmembrane segment spans residues 255 to 273 (FINVLSIIGIVVPIIYFVM). At 274 to 293 (MFTSKKVESDERRKLTAYIP) the chain is on the cytoplasmic side. Residues 294-312 (LFLSAIVFWAIEEQSSTII) form a helical membrane-spanning segment. The Extracellular portion of the chain corresponds to 313-335 (AVWGESRSNLNPTWFGFTFHIDP). A helical membrane pass occupies residues 336–354 (SWYQLLNPLFIVLLSPIFV). Topologically, residues 355-372 (RIWNKLGDRQPSTIVKFG) are cytoplasmic. The chain crosses the membrane as a helical span at residues 373 to 391 (LGLMLTGASYLIMTLPGLL). At 392–425 (NGTSGRASALWLVLMFAVQMAGELLVSPVGLSVS) the chain is on the extracellular side. The chain crosses the membrane as a helical span at residues 426–444 (TKLAPVAFQSQMMAMWFLA). The Cytoplasmic portion of the chain corresponds to 445-497 (DSTSQAINAQITPIFKAATEVHFFAITGIIGIIVGIILLIIKKPILKLMGDVR).

This sequence belongs to the major facilitator superfamily. Proton-dependent oligopeptide transporter (POT/PTR) (TC 2.A.17) family.

It localises to the cell membrane. Functionally, proton-dependent uptake of di- or tri-peptides. This Lactococcus lactis subsp. cremoris (Streptococcus cremoris) protein is Di-/tripeptide transporter (dtpT).